The sequence spans 257 residues: MALPEFSMRQLLEAGVHFGHQTQRWNPRMSPFIYGARNGIHILDLTQTVPMLDQALKAVRDTVAKGGRVLFVGTKRQASGPIAEAAEKSAQYYMNHRWLGGTLTNWKTVSQSIQRLRMIDEKMEGGAEGLTKKERLGMERDQAKLQASLGGIREMGGVPDLLFVIDVKKEALAIAEANKLGIPVVAVVDTNCSPDGVDYIIPGNDDAARAISLYCDLAARAALDGMTAQLGAAGVDLGELEEAPAEEALAEEAAAEA.

Belongs to the universal ribosomal protein uS2 family.

This chain is Small ribosomal subunit protein uS2, found in Ruegeria pomeroyi (strain ATCC 700808 / DSM 15171 / DSS-3) (Silicibacter pomeroyi).